Consider the following 354-residue polypeptide: UDP-N-acetylglucosamine--N-acetylmuramyl-(pentapeptide) pyrophosphoryl-undecaprenol N-acetylglucosamine transferase 3 (354 aa).

UDP-N-acetyl-alpha-D-glucosamine-binding positions include 12–14, R163, S193, and Q287; that span reads TAG.

This sequence belongs to the glycosyltransferase 28 family. MurG subfamily.

It is found in the cell membrane. It catalyses the reaction di-trans,octa-cis-undecaprenyl diphospho-N-acetyl-alpha-D-muramoyl-L-alanyl-D-glutamyl-meso-2,6-diaminopimeloyl-D-alanyl-D-alanine + UDP-N-acetyl-alpha-D-glucosamine = di-trans,octa-cis-undecaprenyl diphospho-[N-acetyl-alpha-D-glucosaminyl-(1-&gt;4)]-N-acetyl-alpha-D-muramoyl-L-alanyl-D-glutamyl-meso-2,6-diaminopimeloyl-D-alanyl-D-alanine + UDP + H(+). Its pathway is cell wall biogenesis; peptidoglycan biosynthesis. In terms of biological role, cell wall formation. Catalyzes the transfer of a GlcNAc subunit on undecaprenyl-pyrophosphoryl-MurNAc-pentapeptide (lipid intermediate I) to form undecaprenyl-pyrophosphoryl-MurNAc-(pentapeptide)GlcNAc (lipid intermediate II). In Bacillus cereus (strain ATCC 14579 / DSM 31 / CCUG 7414 / JCM 2152 / NBRC 15305 / NCIMB 9373 / NCTC 2599 / NRRL B-3711), this protein is UDP-N-acetylglucosamine--N-acetylmuramyl-(pentapeptide) pyrophosphoryl-undecaprenol N-acetylglucosamine transferase 3.